The sequence spans 349 residues: Twinfilin-2 (349 aa).

Alanine 2 bears the N-acetylalanine mark. 2 consecutive ADF-H domains span residues 4–139 (QTGI…KHLS) and 177–313 (GLAF…DEVH). Lysine 14 bears the N6-acetyllysine mark. A Phosphotyrosine modification is found at tyrosine 309. A disordered region spans residues 322 to 349 (AFAKPKGPGGKRGHKRLIRGPGENGEDS). The span at 330–339 (GGKRGHKRLI) shows a compositional bias: basic residues. Serine 349 carries the post-translational modification Phosphoserine.

The protein belongs to the actin-binding proteins ADF family. Twinfilin subfamily. Interacts with G-actin; ADP-actin form and capping protein (CP). Isoform 2 interacts (via its N-terminal ADF-H domain) with G-actin (ADP-bound form) with significantly higher affinity than isoform 1. May also be able to interact with TWF1 and phosphoinositides, PI(4,5)P2. When bound to PI(4,5)P2, it is down-regulated. Interacts with MYO7A. Phosphorylated on both serine/threonine and tyrosine. In terms of tissue distribution, isoform 1 is ubiquitously expressed (at protein level). Isoform 2 expression is restricted to heart and skeletal muscle where it is the predominant form.

Its subcellular location is the cytoplasm. The protein localises to the cytoskeleton. The protein resides in the perinuclear region. It is found in the cell projection. It localises to the stereocilium. Functionally, actin-binding protein involved in motile and morphological processes. Inhibits actin polymerization, likely by sequestering G-actin. By capping the barbed ends of filaments, it also regulates motility. Seems to play an important role in clathrin-mediated endocytosis and distribution of endocytic organelles. May play a role in regulating the mature length of the middle and short rows of stereocilia. This is Twinfilin-2 (Twf2) from Mus musculus (Mouse).